The following is a 111-amino-acid chain: Ig kappa chain V-III region PC 2485/PC 4039 (111 aa).

Residues 1–23 (DIVLTQSPASLAVSLGQRATISC) form a framework-1 region. Cys-23 and Cys-92 are joined by a disulfide. A complementarity-determining-1 region spans residues 24 to 38 (RASKSVSTSGYSYMH). The interval 39–53 (WYQQKPGQPPKLLIY) is framework-2. The complementarity-determining-2 stretch occupies residues 54-60 (LASSLES). The framework-3 stretch occupies residues 61-92 (GVPARFSGSGSGTDFTLNIQPVEEEDAAIYYC). Residues 93-101 (QHSRELPLT) are complementarity-determining-3. A framework-4 region spans residues 102-111 (FGAGTKLELK).

This chain is Ig kappa chain V-III region PC 2485/PC 4039, found in Mus musculus (Mouse).